We begin with the raw amino-acid sequence, 127 residues long: Putative 2Fe-2S ferredoxin (127 aa).

Cys23, Cys54, and Cys58 together coordinate [2Fe-2S] cluster.

Belongs to the 2Fe2S Shethna-type ferredoxin family. The cofactor is [2Fe-2S] cluster.

Its function is as follows. Ferredoxins are iron-sulfur proteins that transfer electrons in a wide variety of metabolic reactions. This Priestia megaterium (Bacillus megaterium) protein is Putative 2Fe-2S ferredoxin (cbiW).